Consider the following 1121-residue polypeptide: Brassinosteroid LRR receptor kinase BRI1 (1121 aa).

Residues 1-24 (MDSLWAAIAALFVAAAVVVRGAAA) form the signal peptide. Residues 54-61 (CRFPGAGC) carry the Cys pair 1 motif. 17 LRR repeats span residues 90–114 (LGSV…GGAR), 116–142 (GSKL…ALAS), 144–167 (CGGL…GGGG), 170–193 (FAGL…RWMV), 197–221 (VGAV…NCSG), 223–243 (QYLD…ALSD), 244–268 (CRGL…IAGL), 269–292 (TSLN…AFAK), 294–317 (QQLT…VASL), 318–341 (PELQ…LCQD), 343–367 (NSKL…VSNC), 369–391 (SLVS…LGDL), 392–415 (GNLQ…LSRI), 416–439 (QGLE…LAKC), 441–463 (KLNW…LGKL), 464–487 (SYLA…LGDC), and 489–511 (SLVW…LAKQ). N-linked (GlcNAc...) asparagine glycosylation occurs at N102. An N-linked (GlcNAc...) asparagine glycan is attached at N151. N218 carries an N-linked (GlcNAc...) asparagine glycan. 4 N-linked (GlcNAc...) asparagine glycosylation sites follow: N251, N275, N280, and N307. Residues N366 and N381 are each glycosylated (N-linked (GlcNAc...) asparagine). 2 N-linked (GlcNAc...) asparagine glycosylation sites follow: N473 and N501. Brassinolide is bound at residue Y525. The stretch at 541 to 564 (GSLLEFTSIRPDDLSRMPSKKLCN) is one LRR 18 repeat. N564 carries N-linked (GlcNAc...) asparagine glycosylation. Y569 is a binding site for brassinolide. N580 carries an N-linked (GlcNAc...) asparagine glycan. 4 LRR repeats span residues 580–603 (NGSM…ELGD), 604–628 (MFYL…LAEA), 629–651 (KKLA…SFSA), and 652–676 (LSLS…SLAT). Residues N658, N665, and N684 are each glycosylated (N-linked (GlcNAc...) asparagine). A Cys pair 2 motif is present at residues 689 to 696 (CGFPLPPC). The segment at 693 to 712 (LPPCDHSSPRSSNDHQSHRR) is disordered. A helical membrane pass occupies residues 719–739 (SIAMGLLFSLFCIIVIIIAIG). One can recognise a Protein kinase domain in the interval 807–1083 (FHIACQIGSG…LKVMAMFKEI (277 aa)). ATP is bound by residues 813 to 821 (IGSGGFGDV), K835, 881 to 883 (DYM), 887 to 890 (SLED), 933 to 938 (DMKSSN), and D951. D933 (proton acceptor) is an active-site residue.

This sequence belongs to the protein kinase superfamily. Ser/Thr protein kinase family. Interacts with BIP103 and BIP131. Interacts with BAK1. Interacts with BSK3. Interacts with SERK2. As to expression, highly expressed in shoots. Expressed at low levels in roots.

Its subcellular location is the cell membrane. The enzyme catalyses L-seryl-[protein] + ATP = O-phospho-L-seryl-[protein] + ADP + H(+). The catalysed reaction is L-threonyl-[protein] + ATP = O-phospho-L-threonyl-[protein] + ADP + H(+). Functionally, receptor kinase involved brassinosteroid (BR) signal transduction. Regulates, in response to BR binding, a signaling cascade involved in plant development, promotion of cell elongation and flowering. Activates BR signaling by targeting and phosphorylating BSK3, a positive regulator of BR signaling. Forms at the plasma membrane a receptor complex with BAK1 which is activated in response to brassinolide. Phosphorylates BAK1. Phosphorylates REM4.1, which reduces REM4.1 binding affinity to BAK1 and allows the formation and subsequent activation of the BRI1-BAK1 receptor complex. Functions in various growth and developmental processes, such as internode elongation, bending of the lamina joint and skotomorphogenesis. Functions in internode elongation by inducing the formation of the intercalary meristem and the longitudinal elongation of internode cells. Involved in organ development through the control of cell division and elongation. Does not seem essential for organ pattern formation or organ initiation. The sequence is that of Brassinosteroid LRR receptor kinase BRI1 from Oryza sativa subsp. japonica (Rice).